Reading from the N-terminus, the 417-residue chain is NADP-specific glutamate dehydrogenase A1 (417 aa).

The active site involves Lys105.

Belongs to the Glu/Leu/Phe/Val dehydrogenases family. As to quaternary structure, homohexamer.

It catalyses the reaction L-glutamate + NADP(+) + H2O = 2-oxoglutarate + NH4(+) + NADPH + H(+). This chain is NADP-specific glutamate dehydrogenase A1 (gdhA1), found in Halobacterium salinarum (Halobacterium halobium).